We begin with the raw amino-acid sequence, 281 residues long: Src-like-adapter (281 aa).

Residues 1 to 20 (MGNSMKSTSPPSERPLSSSE) form a disordered region. Gly-2 carries N-myristoyl glycine lipidation. The span at 7–20 (STSPPSERPLSSSE) shows a compositional bias: low complexity. An SH3 domain is found at 22 to 82 (LESDFLAVLT…PGICVARVYH (61 aa)). The SH2 domain occupies 84–175 (WLFEGLGRDK…GLCCVLTTPC (92 aa)). The interval 190–281 (CTSPGSPVTL…FFSAPQYFED (92 aa)) is SLA C-terminal. Ser-258 is modified (phosphoserine). Phosphotyrosine is present on Tyr-278.

As to quaternary structure, homodimer. Interacts with phosphorylated CBL, SYK and LAT. Homodimerization and interaction with phosphorylated CBL occurs via its C-terminal domain. Interacts with PDGFRB and EPHA2. Interacts with phosphorylated proteins ZAP70; CD3Z; VAV1 and LCP2 via its SH2 domain. Predominantly expressed in lymphoid tissues. Highly expressed in spleen, thymus and lymph nodes. Weakly expressed in lung and brain. Expressed in T-cells and at low level in B-cells.

The protein localises to the cytoplasm. It localises to the endosome. Adapter protein, which negatively regulates T-cell receptor (TCR) signaling. Inhibits T-cell antigen-receptor induced activation of nuclear factor of activated T-cells. Involved in the negative regulation of positive selection and mitosis of T-cells. May act by linking signaling proteins such as ZAP70 with CBL, leading to a CBL dependent degradation of signaling proteins. This chain is Src-like-adapter (Sla), found in Mus musculus (Mouse).